A 431-amino-acid polypeptide reads, in one-letter code: MIEQADEESVFRNRNLVEPDTIIDRDRIVGRDDQLRTVVSNLRKVLNENRPPNLLLYGPAGTGKSLIFDAVARQIRDISKNRGYEFGTLRINCQNLRSLDEAVYALVREAAHDLNEEIGVARHGVSTSTKYDRLYDLLDEGYDSVVFVLDEIDLLLGRRSSSSEPAYSDLIYQLSRASIESIDIQVSVAALTNDPEFMNNLDARAESSFNPRDIPFSDYDANQLQEILRNREDAFIQDALSEDVIPLTSAFAAQSHGDARKAIDLLRKAGDVANENGDLTVTENHVREAQEDVETDRSLKLVEGLTTQKKISLYATAAVAEFGKSGSTTASSRVAFPVYQFLTDVLDADGRTRETFNNYVREVGTYGQLDHERKSLGGKQGGGMYLMYEFKRDPGEIKKRLEQDERIADLSHHEDGLNRVIQAQKRNFAED.

ATP-binding positions include 62–66 (TGKSL), Tyr219, and Arg231.

Belongs to the CDC6/cdc18 family.

In terms of biological role, involved in regulation of DNA replication. The chain is ORC1-type DNA replication protein 14 (cdc6n) from Haloarcula marismortui (strain ATCC 43049 / DSM 3752 / JCM 8966 / VKM B-1809) (Halobacterium marismortui).